The sequence spans 128 residues: Sulfurtransferase TusD (128 aa).

The active-site Cysteine persulfide intermediate is the Cys78.

The protein belongs to the DsrE/TusD family. Heterohexamer, formed by a dimer of trimers. The hexameric TusBCD complex contains 2 copies each of TusB, TusC and TusD. The TusBCD complex interacts with TusE.

The protein resides in the cytoplasm. Part of a sulfur-relay system required for 2-thiolation of 5-methylaminomethyl-2-thiouridine (mnm(5)s(2)U) at tRNA wobble positions. Accepts sulfur from TusA and transfers it in turn to TusE. This chain is Sulfurtransferase TusD, found in Enterobacter sp. (strain 638).